The primary structure comprises 508 residues: Histidine ammonia-lyase (508 aa).

Positions 143–145 (ASG) form a cross-link, 5-imidazolinone (Ala-Gly). A 2,3-didehydroalanine (Ser) modification is found at Ser-144.

This sequence belongs to the PAL/histidase family. Contains an active site 4-methylidene-imidazol-5-one (MIO), which is formed autocatalytically by cyclization and dehydration of residues Ala-Ser-Gly.

Its subcellular location is the cytoplasm. It carries out the reaction L-histidine = trans-urocanate + NH4(+). Its pathway is amino-acid degradation; L-histidine degradation into L-glutamate; N-formimidoyl-L-glutamate from L-histidine: step 1/3. This chain is Histidine ammonia-lyase, found in Anaeromyxobacter sp. (strain K).